The sequence spans 419 residues: Glutamate dehydrogenase (419 aa).

The active site involves Lys105. Residue 219–225 (GYGNAGY) coordinates NAD(+).

Belongs to the Glu/Leu/Phe/Val dehydrogenases family. Homohexamer.

It is found in the cytoplasm. It carries out the reaction L-glutamate + NAD(+) + H2O = 2-oxoglutarate + NH4(+) + NADH + H(+). It catalyses the reaction L-glutamate + NADP(+) + H2O = 2-oxoglutarate + NH4(+) + NADPH + H(+). This chain is Glutamate dehydrogenase (gdhA), found in Thermococcus litoralis (strain ATCC 51850 / DSM 5473 / JCM 8560 / NS-C).